The sequence spans 72 residues: Brevinin-2SN4 (72 aa).

A signal peptide spans 1 to 22 (MFTMKKPMLLLFFLGMISMSLC). Positions 23–40 (QDERGADEDDGGEMTEEE) are cleaved as a propeptide — removed in mature form. A disulfide bridge connects residues cysteine 66 and cysteine 72.

Belongs to the frog skin active peptide (FSAP) family. Brevinin subfamily. Expressed by the skin glands.

It localises to the secreted. Antimicrobial peptide. Active against a variety of Gram-negative and Gram-positive bacterial strains. Not active against fungi. Shows very weak hemolytic activity against human erythrocytes. This Sylvirana spinulosa (Fine-spined frog) protein is Brevinin-2SN4.